We begin with the raw amino-acid sequence, 1355 residues long: Probable major glycoprotein (1355 aa).

The first 16 residues, 1 to 16 (MKKTMLAIILIPLVYA), serve as a signal peptide directing secretion. Asn-81, Asn-112, Asn-129, Asn-169, Asn-173, Asn-192, Asn-542, Asn-655, Asn-682, Asn-744, Asn-780, Asn-811, Asn-815, Asn-860, Asn-865, Asn-882, Asn-895, Asn-1213, Asn-1225, Asn-1267, and Asn-1274 each carry an N-linked (GlcNAc...) asparagine; by host glycan. Positions 1245–1299 (QIVSMEMEIQDLKLELIQLQKINTSVHMENITGDIDAMKATIEEYRAEMAKLRVT) form a coiled coil. Residues 1308–1328 (FIYAILGVIAIGALIAIIFMA) form a helical membrane-spanning segment.

Its subcellular location is the host membrane. The sequence is that of Probable major glycoprotein (ORF46) from Ictaluridae (bullhead catfishes).